The primary structure comprises 156 residues: Protein Smg homolog (156 aa).

The protein belongs to the Smg family.

This is Protein Smg homolog from Halorhodospira halophila (strain DSM 244 / SL1) (Ectothiorhodospira halophila (strain DSM 244 / SL1)).